Consider the following 361-residue polypeptide: Alanine racemase (361 aa).

Lys-34 serves as the catalytic Proton acceptor; specific for D-alanine. Lys-34 is subject to N6-(pyridoxal phosphate)lysine. Arg-129 is a binding site for substrate. The active-site Proton acceptor; specific for L-alanine is the Tyr-256. Met-304 is a substrate binding site.

The protein belongs to the alanine racemase family. As to quaternary structure, homodimer. It depends on pyridoxal 5'-phosphate as a cofactor.

The enzyme catalyses L-alanine = D-alanine. Its pathway is amino-acid biosynthesis; D-alanine biosynthesis; D-alanine from L-alanine: step 1/1. Its function is as follows. Catalyzes the interconversion of L-alanine and D-alanine. May also act on other amino acids. In Corynebacterium glutamicum (strain ATCC 13032 / DSM 20300 / JCM 1318 / BCRC 11384 / CCUG 27702 / LMG 3730 / NBRC 12168 / NCIMB 10025 / NRRL B-2784 / 534), this protein is Alanine racemase (alr).